Here is a 76-residue protein sequence, read N- to C-terminus: Small ribosomal subunit protein bS16 (76 aa).

Belongs to the bacterial ribosomal protein bS16 family.

This Sulfurovum sp. (strain NBC37-1) protein is Small ribosomal subunit protein bS16.